The following is a 412-amino-acid chain: Cinnamoyl-CoA:phenyllactate CoA-transferase (412 aa).

Asparagine 102 contributes to the CoA binding site. Catalysis depends on aspartate 176, which acts as the Nucleophile.

In terms of assembly, homodimer. Part of the heterotrimeric phenyllactate dehydratase complex FldABC, composed of (R)-phenyllactate CoA-transferase (FldA) and a heterodimeric (R)-phenyllactyl-CoA dehydratase (FldB and FldC).

It carries out the reaction (E)-cinnamoyl-CoA + (R)-3-phenyllactate = (R)-3-phenyllactoyl-CoA + (E)-cinnamate. It participates in amino-acid degradation; L-phenylalanine degradation. In terms of biological role, component of the phenyllactate dehydratase complex FldABC that is involved in the fermentation of L-phenylalanine via a Stickland reaction. This complex catalyzes the reversible syn-dehydration of (R)-phenyllactate to (E)-cinnamate in two steps, a CoA-transfer from cinnamoyl-CoA to phenyllactate, catalyzed by FldA, followed by the dehydration of phenyllactyl-CoA to cinnamoyl-CoA, catalyzed by FldB and FldC. In vitro, FldA can use 3-phenylpropanoate as a better CoA-acceptor than phenyllactate. The sequence is that of Cinnamoyl-CoA:phenyllactate CoA-transferase from Clostridium sporogenes.